A 726-amino-acid polypeptide reads, in one-letter code: NHL repeat-containing protein 2 (726 aa).

Residues 43–200 (QKVDGWEQDL…TSIALKYYKD (158 aa)) form the Thioredoxin domain. NHL repeat units follow at residues 212 to 254 (KLYK…VWKN), 265 to 307 (NPGR…IDLE), 335 to 369 (ISSP…IWAL), 409 to 439 (FAQP…VRTV), 461 to 505 (AFGD…VDPK), and 518 to 562 (TNNV…MDLE).

In terms of assembly, monomer. In terms of tissue distribution, ubiquitous. Detected in heart, kidney, muscle, brain, lung, liver and in skin fibroblasts (at protein level).

It localises to the cytoplasm. The protein resides in the cytosol. In terms of biological role, required for normal embryonic development. This is NHL repeat-containing protein 2 (NHLRC2) from Homo sapiens (Human).